The following is a 458-amino-acid chain: tRNA modification GTPase MnmE (458 aa).

3 residues coordinate (6S)-5-formyl-5,6,7,8-tetrahydrofolate: R26, E88, and R127. Positions 224 to 378 (GLSTAIIGRP…IEDRINQLFF (155 aa)) constitute a TrmE-type G domain. N234 provides a ligand contact to K(+). GTP contacts are provided by residues 234–239 (NVGKSS), 253–259 (TDIAGTT), and 278–281 (DTAG). S238 serves as a coordination point for Mg(2+). Residues T253, I255, and T258 each coordinate K(+). Residue T259 coordinates Mg(2+). K458 serves as a coordination point for (6S)-5-formyl-5,6,7,8-tetrahydrofolate.

Belongs to the TRAFAC class TrmE-Era-EngA-EngB-Septin-like GTPase superfamily. TrmE GTPase family. In terms of assembly, homodimer. Heterotetramer of two MnmE and two MnmG subunits. K(+) serves as cofactor.

It is found in the cytoplasm. Exhibits a very high intrinsic GTPase hydrolysis rate. Involved in the addition of a carboxymethylaminomethyl (cmnm) group at the wobble position (U34) of certain tRNAs, forming tRNA-cmnm(5)s(2)U34. The polypeptide is tRNA modification GTPase MnmE (Streptococcus pyogenes serotype M5 (strain Manfredo)).